The primary structure comprises 192 residues: Fe/S biogenesis protein NfuA (192 aa).

[4Fe-4S] cluster is bound by residues cysteine 149 and cysteine 152.

The protein belongs to the NfuA family. As to quaternary structure, homodimer. The cofactor is [4Fe-4S] cluster.

In terms of biological role, involved in iron-sulfur cluster biogenesis. Binds a 4Fe-4S cluster, can transfer this cluster to apoproteins, and thereby intervenes in the maturation of Fe/S proteins. Could also act as a scaffold/chaperone for damaged Fe/S proteins. The polypeptide is Fe/S biogenesis protein NfuA (Aeromonas salmonicida (strain A449)).